A 132-amino-acid polypeptide reads, in one-letter code: N,N-dimethylformamidase alpha subunit (132 aa).

Heterotetramer of two DmfA1 (alpha) and two DmfA2 (beta) subunits.

The catalysed reaction is N,N-dimethylformamide + H2O = dimethylamine + formate. Its activity is regulated as follows. Activity is slightly inhibited by Mg(2+) and Mn(2+), and slightly increased by Cu(2+). Activity is slightly inhibited by the chelating agents 8-hydroxyquinoline, ethylenediaminetetraacetate, o-phenanthroline and 2,2'-bipyridyl. Hydrolyzes N,N-dimethylformamide, and to a lesser extent N,N-dimethylacetamide and N,N-diethylacetamide. Has no activity against the substituted amides N-methylformamide, N-ethylformamide, N-ethylformamide and N-methylacetamide or the unsubstituted amides formamide, nicotinamide, acetoamide, benzamide, acetamide and acrylamide. This is N,N-dimethylformamidase alpha subunit from Alcaligenes sp.